Reading from the N-terminus, the 261-residue chain is Carnitinyl-CoA dehydratase (261 aa).

The active-site Nucleophile is the Glu-111. Glu-131 (proton acceptor) is an active-site residue.

Belongs to the enoyl-CoA hydratase/isomerase family.

The catalysed reaction is (R)-carnitinyl-CoA = crotonobetainyl-CoA + H2O. The protein operates within amine and polyamine metabolism; carnitine metabolism. Catalyzes the reversible dehydration of L-carnitinyl-CoA to crotonobetainyl-CoA. The chain is Carnitinyl-CoA dehydratase from Escherichia coli O157:H7.